A 216-amino-acid polypeptide reads, in one-letter code: ATP synthase subunit a (216 aa).

7 helical membrane passes run 1–21 (MEYS…IFVL), 62–82 (LIAA…VPGF), 88–108 (NINT…FEGF), 119–139 (FMGP…ISHI), 149–169 (LFAN…LVIK), 174–194 (LVVS…AIFI), and 196–216 (TYIF…HEEH).

The protein belongs to the ATPase A chain family. In terms of assembly, F-type ATPases have 2 components, CF(1) - the catalytic core - and CF(0) - the membrane proton channel. CF(1) has five subunits: alpha(3), beta(3), gamma(1), delta(1), epsilon(1). CF(0) has three main subunits: a(1), b(2) and c(9-12). The alpha and beta chains form an alternating ring which encloses part of the gamma chain. CF(1) is attached to CF(0) by a central stalk formed by the gamma and epsilon chains, while a peripheral stalk is formed by the delta and b chains.

The protein localises to the cell inner membrane. Key component of the proton channel; it plays a direct role in the translocation of protons across the membrane. This is ATP synthase subunit a from Aquifex aeolicus (strain VF5).